A 1397-amino-acid polypeptide reads, in one-letter code: DNA-directed RNA polymerase subunit beta (1397 aa).

Belongs to the RNA polymerase beta chain family. As to quaternary structure, the RNAP catalytic core consists of 2 alpha, 1 beta, 1 beta' and 1 omega subunit. When a sigma factor is associated with the core the holoenzyme is formed, which can initiate transcription.

It catalyses the reaction RNA(n) + a ribonucleoside 5'-triphosphate = RNA(n+1) + diphosphate. Its function is as follows. DNA-dependent RNA polymerase catalyzes the transcription of DNA into RNA using the four ribonucleoside triphosphates as substrates. In Rhodospirillum centenum (strain ATCC 51521 / SW), this protein is DNA-directed RNA polymerase subunit beta.